The primary structure comprises 1396 residues: Major capsid protein (1396 aa).

This sequence belongs to the herpesviridae major capsid protein family. As to quaternary structure, homomultimer. Makes the hexons and eleven out of twelve pentons. Interacts with triplex proteins 1/TRX1 and 2/TRX2; adjacent capsomers are linked together in groups of three by triplexes, heterotrimeric complexes composed of one molecule of TRX1 and two molecules of TRX2. Interacts with scaffold protein; this interaction allows efficient MCP transport to the host nucleus. Interacts with capsid vertex component 2/CVC2. Interacts with the small capsomere-interacting protein/SCP.

Its subcellular location is the virion. The protein resides in the host nucleus. Its function is as follows. Self-assembles to form an icosahedral capsid with a T=16 symmetry, about 200 nm in diameter, and consisting of 150 hexons and 12 pentons (total of 162 capsomers). Hexons form the edges and faces of the capsid and are each composed of six MCP molecules. In contrast, one penton is found at each of the 12 vertices. Eleven of the pentons are MCP pentamers, while the last vertex is occupied by the portal complex. The capsid is surrounded by a layer of proteinaceous material designated the tegument which, in turn, is enclosed in an envelope of host cell-derived lipids containing virus-encoded glycoproteins. The polypeptide is Major capsid protein (Varicella-zoster virus (strain Dumas) (HHV-3)).